A 234-amino-acid chain; its full sequence is Purine nucleoside phosphorylase DeoD-type (234 aa).

His-5 serves as a coordination point for a purine D-ribonucleoside. Phosphate contacts are provided by residues Gly-21, Arg-25, Arg-44, and 88-91 (RVGT). A purine D-ribonucleoside-binding positions include 178–180 (EME) and 202–203 (SD). The Proton donor role is filled by Asp-203.

Belongs to the PNP/UDP phosphorylase family. In terms of assembly, homohexamer; trimer of homodimers.

It carries out the reaction a purine D-ribonucleoside + phosphate = a purine nucleobase + alpha-D-ribose 1-phosphate. It catalyses the reaction a purine 2'-deoxy-D-ribonucleoside + phosphate = a purine nucleobase + 2-deoxy-alpha-D-ribose 1-phosphate. Functionally, catalyzes the reversible phosphorolytic breakdown of the N-glycosidic bond in the beta-(deoxy)ribonucleoside molecules, with the formation of the corresponding free purine bases and pentose-1-phosphate. The polypeptide is Purine nucleoside phosphorylase DeoD-type (Lactococcus lactis subsp. cremoris (strain MG1363)).